Here is an 85-residue protein sequence, read N- to C-terminus: Large ribosomal subunit protein bL27 (85 aa).

Residues 1 to 22 are disordered; the sequence is MAHKKAGGSTRNGRDSESKRLG.

It belongs to the bacterial ribosomal protein bL27 family.

The polypeptide is Large ribosomal subunit protein bL27 (Marinomonas sp. (strain MWYL1)).